The following is a 335-amino-acid chain: 2-acylglycerol O-acyltransferase 1 (335 aa).

2 helical membrane passes run 24–44 (WVLS…MLVL) and 104–124 (YIFG…NFCT). A glycan (N-linked (GlcNAc...) asparagine) is linked at Asn180.

The protein belongs to the diacylglycerol acyltransferase family. Expressed at high level in kidney and stomach. Expressed at lower level in brown and white adipose tissue, uterus and liver. Not detected in small intestine.

The protein resides in the endoplasmic reticulum membrane. It carries out the reaction a 2-acylglycerol + an acyl-CoA = a 1,2-diacylglycerol + CoA. It catalyses the reaction 2-(9Z-octadecenoyl)-glycerol + butanoyl-CoA = 1-butanoyl-2-(9Z-octadecenoyl)-glycerol + CoA. The catalysed reaction is 2-(9Z-octadecenoyl)-glycerol + octanoyl-CoA = 1-octanoyl-2-(9Z-octadecenoyl)-glycerol + CoA. The enzyme catalyses 2-(9Z-octadecenoyl)-glycerol + dodecanoyl-CoA = 1-dodecanoyl-2-(9Z-octadecenoyl)-glycerol + CoA. It carries out the reaction 2-(9Z-octadecenoyl)-glycerol + tetradecanoyl-CoA = 1-tetradecanoyl-2-(9Z-octadecenoyl)-glycerol + CoA. It catalyses the reaction 2-(9Z-octadecenoyl)-glycerol + hexadecanoyl-CoA = 1-hexadecanoyl-2-(9Z-octadecenoyl)-glycerol + CoA. The catalysed reaction is 2-(9Z-octadecenoyl)-glycerol + octadecanoyl-CoA = 1-octadecanoyl-2-(9Z-octadecenoyl)-glycerol + CoA. The enzyme catalyses eicosanoyl-CoA + 2-(9Z-octadecenoyl)-glycerol = 1-eicosanoyl-2-(9Z-octadecenoyl)-glycerol + CoA. It carries out the reaction 2-(9Z-octadecenoyl)-glycerol + (9Z)-octadecenoyl-CoA = 1,2-di-(9Z-octadecenoyl)-glycerol + CoA. It catalyses the reaction 2-(9Z-octadecenoyl)-glycerol + (9Z,12Z)-octadecadienoyl-CoA = 1-(9Z,12Z-octadecadienoyl)-2-(9Z-octadecenoyl)-glycerol + CoA. The catalysed reaction is 2-(9Z-octadecenoyl)-glycerol + (5Z,8Z,11Z,14Z)-eicosatetraenoyl-CoA = 1-(5Z,8Z,11Z,14Z-eicosatetraenoyl)-2-(9Z-octadecenoyl)-glycerol + CoA. The enzyme catalyses a 2-acylglycerol + an acyl-CoA = a 1,2-diacyl-sn-glycerol + CoA. It carries out the reaction a 2-acylglycerol + an acyl-CoA = a 2,3-diacyl-sn-glycerol + CoA. It catalyses the reaction a 1-acylglycerol + an acyl-CoA = a 1,2-diacylglycerol + CoA. The catalysed reaction is 1-dodecanoylglycerol + (9Z)-octadecenoyl-CoA = 1-dodecanoyl-2-(9Z-octadecenoyl)-glycerol + CoA. The enzyme catalyses 1-tetradecanoylglycerol + (9Z)-octadecenoyl-CoA = 1-tetradecanoyl-2-(9Z-octadecenoyl)-glycerol + CoA. It carries out the reaction 1-hexadecanoylglycerol + (9Z)-octadecenoyl-CoA = 1-hexadecanoyl-2-(9Z-octadecenoyl)-glycerol + CoA. It catalyses the reaction 1-(9Z-octadecenoyl)-glycerol + (9Z)-octadecenoyl-CoA = 1,2-di-(9Z-octadecenoyl)-glycerol + CoA. The catalysed reaction is 1-(9Z,12Z-octadecadienoyl)-glycerol + (9Z)-octadecenoyl-CoA = 1-(9Z,12Z-octadecadienoyl)-2-(9Z-octadecenoyl)-glycerol + CoA. The enzyme catalyses 1-(9Z,12Z,15Z-octadecatrienoyl)-glycerol + (9Z)-octadecenoyl-CoA = 1-(9Z,12Z,15Z-octadecatrienoyl)-2-(9Z-octadecenoyl)-glycerol + CoA. It carries out the reaction 1-(5Z,8Z,11Z,14Z-eicosatetraenoyl)-glycerol + (9Z)-octadecenoyl-CoA = 1-(5Z,8Z,11Z,14Z-eicosatetraenoyl)-2-(9Z-octadecenoyl)-glycerol + CoA. It catalyses the reaction a 1-acylglycerol + an acyl-CoA = a 1,3-diacylglycerol + CoA. The catalysed reaction is 1-dodecanoylglycerol + (9Z)-octadecenoyl-CoA = 1-dodecanoyl-3-(9Z-octadecenoyl)-glycerol + CoA. The enzyme catalyses 1-hexadecanoylglycerol + (9Z)-octadecenoyl-CoA = 1-(9Z-octadecenoyl)-3-hexadecanoylglycerol + CoA. It carries out the reaction 1-octadecanoylglycerol + (9Z)-octadecenoyl-CoA = 1-octadecanoyl-3-(9Z-octadecenoyl)-glycerol + CoA. It catalyses the reaction 1-(9Z-octadecenoyl)-sn-glycerol + (9Z)-octadecenoyl-CoA = 1,3-di-(9Z-octadecenoyl)-glycerol + CoA. The catalysed reaction is 1-(9Z,12Z-octadecadienoyl)-glycerol + (9Z)-octadecenoyl-CoA = 1-(9Z-octadecenoyl)-3-(9Z,12Z-octadecadienoyl)-glycerol + CoA. The enzyme catalyses 1-(9Z,12Z,15Z-octadecatrienoyl)-glycerol + (9Z)-octadecenoyl-CoA = 1-(9Z,12Z,15Z-octadecatrienoyl)-3-(9Z-octadecenoyl)-glycerol + CoA. It carries out the reaction a 1-acyl-sn-glycerol + an acyl-CoA = a 1,3-diacyl-sn-glycerol + CoA. It catalyses the reaction a 3-acyl-sn-glycerol + an acyl-CoA = a 1,3-diacyl-sn-glycerol + CoA. The catalysed reaction is 3-octadecanoyl-sn-glycerol + (9Z)-octadecenoyl-CoA = 1-(9Z-octadecenoyl)-3-octadecanoyl-sn-glycerol + CoA. The protein operates within glycerolipid metabolism; triacylglycerol biosynthesis. In terms of biological role, involved in glycerolipid synthesis and lipid metabolism. Catalyzes the formation of diacylglycerol, the precursor of triacylglycerol, by transferring the acyl chain of a fatty acyl-CoA to a monoacylglycerol, mainly at the sn-1 or sn-3 positions. It uses both sn-2-monoacylglycerol (2-acylglycerol) and sn-1-monoacylglycerol (1-acyl-sn-glycerol) equally well as substrates, and uses sn-3-monoacylglycerol (3-acyl-sn-glycerol) with lower efficiency. Probably not involved in absorption of dietary fat in the small intestine. The sequence is that of 2-acylglycerol O-acyltransferase 1 from Mus musculus (Mouse).